Here is a 400-residue protein sequence, read N- to C-terminus: Cytoplasmic polyadenylated homeobox-like protein 2 (400 aa).

Positions 1-29 are disordered; that stretch reads MSSQAFPAEEDHHNEERQTKKKRKTKHRH. The segment covering 9 to 18 has biased composition (basic and acidic residues); sequence EEDHHNEERQ. The span at 19-29 shows a compositional bias: basic residues; sequence TKKKRKTKHRH. Residues 24–83 constitute a DNA-binding region (homeobox); the sequence is KTKHRHKFSEELLQELKEIFGENGYPDFTTRKTLANKFDCPVNVINNWFQNNRARLPPEE.

It localises to the nucleus. The chain is Cytoplasmic polyadenylated homeobox-like protein 2 from Homo sapiens (Human).